Here is a 260-residue protein sequence, read N- to C-terminus: 5'-nucleotidase SurE (260 aa).

The a divalent metal cation site is built by Asp8, Asp9, Ser43, and Asn96.

It belongs to the SurE nucleotidase family. Requires a divalent metal cation as cofactor.

The protein localises to the cytoplasm. It catalyses the reaction a ribonucleoside 5'-phosphate + H2O = a ribonucleoside + phosphate. Nucleotidase that shows phosphatase activity on nucleoside 5'-monophosphates. The sequence is that of 5'-nucleotidase SurE from Ruegeria sp. (strain TM1040) (Silicibacter sp.).